The sequence spans 411 residues: BRO1 domain-containing protein BROX (411 aa).

Positions 90–395 (FKWTDTLQGN…PKKEEEVKPM (306 aa)) constitute a BRO1 domain. The segment at 362–411 (TSQWSPETHTGFDLTKRPKDDSAKPKKEEEVKPMKEPDIKPQKDSGCQIS) is disordered. Residues 375 to 404 (LTKRPKDDSAKPKKEEEVKPMKEPDIKPQK) show a composition bias toward basic and acidic residues. Position 408 is a cysteine methyl ester (cysteine 408). Cysteine 408 carries S-farnesyl cysteine lipidation. Residues 409–411 (QIS) constitute a propeptide, removed in mature form.

Belongs to the BROX family. Post-translationally, farnesylation is required for nuclear envelope localization.

It localises to the nucleus membrane. Nuclear envelope-associated factor that is involved in the nuclear envelope ruptures during interphase (NERDI) repair. The polypeptide is BRO1 domain-containing protein BROX (Xenopus tropicalis (Western clawed frog)).